The sequence spans 117 residues: ATP-dependent Clp protease adapter protein ClpS 1 (117 aa).

This sequence belongs to the ClpS family. Binds to the N-terminal domain of the chaperone ClpA.

In terms of biological role, involved in the modulation of the specificity of the ClpAP-mediated ATP-dependent protein degradation. The sequence is that of ATP-dependent Clp protease adapter protein ClpS 1 from Agrobacterium fabrum (strain C58 / ATCC 33970) (Agrobacterium tumefaciens (strain C58)).